Reading from the N-terminus, the 503-residue chain is MASGRRAPRTGLLELRCGAGSGAGGERWQRVLLSLAEDALTVSPADGEPGPEPEPAQLNGAAEPGAAPPQLPEALLLQRRRVTVRKADAGGLGISIKGGRENKMPILISKIFKGLAADQTEALFVGDAILSVNGEDLSSATHDEAVQALKKTGKEVVLEVKYMKEVSPYFKNSAGGTSVGWDSPPASPLQRQPSSPGPQPRNLSEAKHVSLKMAYVSRRCTPTDPEPRYLEICAADGQDAVFLRAKDEASARSWAGAIQAQIGTFIPWVKDELQALLTATGTAGSQDIKQIGWLTEQLPSGGTAPTLALLTEKELLFYCSLPQSREALSRPTRTAPLIATSSAHRLVHSGPSKGSVPYDAELSFALRTGTRHGVDTHLFSVESPQELAAWTRQLVDGCHRAAEGIQEVSTACTWNGRPCSLSVHIDKGFTLWAAEPGAARAMLLRQPFEKLQMSSDDGTSLLFLDFGGAEGEIQLDLHSCPKTMVFIIHSFLSAKVTRLGLLA.

2 consecutive PH domains span residues 6 to 263 and 287 to 399; these read RAPR…AQIG and DIKQ…DGCH. The tract at residues 40–68 is disordered; sequence LTVSPADGEPGPEPEPAQLNGAAEPGAAP. A PDZ domain is found at 81–164; sequence RVTVRKADAG…EVVLEVKYMK (84 aa). Phosphoserine occurs at positions 95, 178, 183, 187, and 194. The tract at residues 177–203 is disordered; it reads TSVGWDSPPASPLQRQPSSPGPQPRNL. Positions 447–503 constitute an SU domain; sequence PFEKLQMSSDDGTSLLFLDFGGAEGEIQLDLHSCPKTMVFIIHSFLSAKVTRLGLLA. Positions 481–503 are calmodulin-binding; that stretch reads PKTMVFIIHSFLSAKVTRLGLLA.

It belongs to the syntrophin family. Monomer and homodimer. Interacts with MAPK12, TGFA, GA and F-actin. Interacts with the other members of the syntrophin family: SNTB1 and SNTB2; with dystrophin protein DMD and related proteins DTNA and UTRN; SGCG and SGCA of the dystrophin glycoprotein complex; NOS1; GRB2; calmodulin and the sodium channel proteins SCN4A and SCN5A. Interacts with MYOC; regulates muscle hypertrophy. Interacts with DTNB. In terms of processing, phosphorylated by CaM-kinase II. Phosphorylation may inhibit the interaction with DMD. As to expression, high expression in skeletal muscle. Expressed at intermediate level in heart, kidney and brain, and at low level in intestine, liver, lung and testis.

The protein resides in the cell membrane. The protein localises to the sarcolemma. Its subcellular location is the cell junction. It localises to the cytoplasm. It is found in the cytoskeleton. Adapter protein that binds to and probably organizes the subcellular localization of a variety of membrane proteins. May link various receptors to the actin cytoskeleton and the extracellular matrix via the dystrophin glycoprotein complex. Plays an important role in synapse formation and in the organization of UTRN and acetylcholine receptors at the neuromuscular synapse. Binds to phosphatidylinositol 4,5-bisphosphate. The polypeptide is Alpha-1-syntrophin (Snta1) (Mus musculus (Mouse)).